A 341-amino-acid polypeptide reads, in one-letter code: HTH-type transcriptional repressor PurR (341 aa).

Positions 2–56 (ATIKDVAKRANVSTTTVSHVINKTRFVAEETRNAVWAAIKELHYSPSAVARSLKV) constitute an HTH lacI-type domain. The H-T-H motif DNA-binding region spans 4–23 (IKDVAKRANVSTTTVSHVIN). The DNA-binding element occupies 48 to 56 (SAVARSLKV). Tyr73, Arg190, Thr192, Phe221, and Asp275 together coordinate hypoxanthine.

In terms of assembly, homodimer.

It functions in the pathway purine metabolism; purine nucleotide biosynthesis [regulation]. In terms of biological role, is the main repressor of the genes involved in the de novo synthesis of purine nucleotides, regulating purB, purC, purEK, purF, purHD, purL, purMN and guaBA expression. PurR is allosterically activated to bind its cognate DNA by binding the purine corepressors, hypoxanthine or guanine, thereby effecting transcription repression. The sequence is that of HTH-type transcriptional repressor PurR from Klebsiella pneumoniae subsp. pneumoniae (strain ATCC 700721 / MGH 78578).